A 2027-amino-acid polypeptide reads, in one-letter code: Mediator of RNA polymerase II transcription subunit 12 (2027 aa).

The residue at position 13 (Tyr-13) is a Phosphotyrosine. 4 disordered regions span residues 170–191 (QSTS…TPST), 474–516 (GAPG…MDID), 538–563 (MPCE…PPKE), and 1088–1113 (TVTG…QGGR). Ser-482, Ser-512, Ser-545, and Ser-547 each carry phosphoserine. Over residues 549–563 (EKPDVEKEVKPPPKE) the composition is skewed to basic and acidic residues. 2 positions are modified to phosphoserine: Ser-1105 and Ser-1116. Residues 1241 to 1258 (AETGSSSGSTASNMPSSS) are compositionally biased toward low complexity. Disordered stretches follow at residues 1241 to 1262 (AETG…KTKP), 1297 to 1321 (ELEK…KSMS), and 1585 to 1676 (YLEP…PGSI). Basic and acidic residues-rich tracts occupy residues 1297–1316 (ELEK…DRQK) and 1605–1618 (EPEK…KTDK). The interaction with CTNNB1 and GLI3 stretch occupies residues 1463–1901 (LAKKLQKELG…VRSTAILPEQ (439 aa)). Positions 1631–1640 (KKSTKGKKRS) are enriched in basic residues. At Lys-1645 the chain carries N6-acetyllysine. Arg-1746 bears the Asymmetric dimethylarginine; alternate mark. Omega-N-methylarginine; alternate is present on Arg-1746. Position 1757 is an omega-N-methylarginine (Arg-1757). The tract at residues 1805 to 1848 (QHTGPAGTMVPPSYSSQPYQSTHPSTNPTLVDPTRHLQQRPSGY) is disordered. Over residues 1815-1830 (PPSYSSQPYQSTHPST) the composition is skewed to low complexity. An asymmetric dimethylarginine mark is found at Arg-1844 and Arg-1865. Low complexity-rich tracts occupy residues 1965–1975 (QHQQQQQQQAA), 1983–1999 (SQPQ…QQQQ), and 2008–2021 (LQQQ…QPST). Disordered regions lie at residues 1965 to 1999 (QHQQ…QQQQ) and 2008 to 2027 (LQQQ…FGRY).

The protein belongs to the Mediator complex subunit 12 family. In terms of assembly, component of the Mediator complex, which is composed of MED1, MED4, MED6, MED7, MED8, MED9, MED10, MED11, MED12, MED13, MED13L, MED14, MED15, MED16, MED17, MED18, MED19, MED20, MED21, MED22, MED23, MED24, MED25, MED26, MED27, MED29, MED30, MED31, CCNC, CDK8 and CDC2L6/CDK11. The MED12, MED13, CCNC and CDK8 subunits form a distinct module termed the CDK8 module. Mediator containing the CDK8 module is less active than Mediator lacking this module in supporting transcriptional activation. Individual preparations of the Mediator complex lacking one or more distinct subunits have been variously termed ARC, CRSP, DRIP, PC2, SMCC and TRAP. Also interacts with CTNNB1 and GLI3.

The protein resides in the nucleus. Its function is as follows. Component of the Mediator complex, a coactivator involved in the regulated transcription of nearly all RNA polymerase II-dependent genes. Mediator functions as a bridge to convey information from gene-specific regulatory proteins to the basal RNA polymerase II transcription machinery. Mediator is recruited to promoters by direct interactions with regulatory proteins and serves as a scaffold for the assembly of a functional preinitiation complex with RNA polymerase II and the general transcription factors. This subunit may specifically regulate transcription of targets of the Wnt signaling pathway and SHH signaling pathway. The polypeptide is Mediator of RNA polymerase II transcription subunit 12 (MED12) (Pan troglodytes (Chimpanzee)).